The following is a 354-amino-acid chain: cAMP-dependent protein kinase catalytic subunit 2 (354 aa).

In terms of domain architecture, Protein kinase spans Y45–F301. ATP is bound by residues L51–V59 and K74. Residue D168 is the Proton acceptor of the active site. The AGC-kinase C-terminal domain occupies Q302–F354.

It belongs to the protein kinase superfamily. AGC Ser/Thr protein kinase family. cAMP subfamily. More abundant in adult body than adult head.

It carries out the reaction L-seryl-[protein] + ATP = O-phospho-L-seryl-[protein] + ADP + H(+). It catalyses the reaction L-threonyl-[protein] + ATP = O-phospho-L-threonyl-[protein] + ADP + H(+). The chain is cAMP-dependent protein kinase catalytic subunit 2 (Pka-C2) from Drosophila melanogaster (Fruit fly).